A 162-amino-acid polypeptide reads, in one-letter code: Interleukin-15 (162 aa).

An N-terminal signal peptide occupies residues 1–29 (MRILKPYLRSTSIQCYLCLLLNSHFLTEA). A propeptide spanning residues 30–48 (GIHVFILGCISAGLPKTEA) is cleaved from the precursor. 2 disulfides stabilise this stretch: cysteine 83/cysteine 133 and cysteine 90/cysteine 136. N-linked (GlcNAc...) asparagine glycosylation is found at asparagine 113, asparagine 121, and asparagine 127.

Belongs to the IL-15/IL-21 family.

Its subcellular location is the secreted. Its function is as follows. Cytokine that plays a major role in the development of inflammatory and protective immune responses to microbial invaders and parasites by modulating immune cells of both the innate and adaptive immune systems. Stimulates the proliferation of natural killer cells, T-cells and B-cells and promotes the secretion of several cytokines. In monocytes, induces the production of IL8 and monocyte chemotactic protein 1/CCL2, two chemokines that attract neutrophils and monocytes respectively to sites of infection. Unlike most cytokines, which are secreted in soluble form, IL15 is expressed in association with its high affinity IL15RA on the surface of IL15-producing cells and delivers signals to target cells that express IL2RB and IL2RG receptor subunits. Binding to its receptor triggers the phosphorylation of JAK1 and JAK3 and the recruitment and subsequent phosphorylation of signal transducer and activator of transcription-3/STAT3 and STAT5. In mast cells, induces the rapid tyrosine phosphorylation of STAT6 and thereby controls mast cell survival and release of cytokines such as IL4. The polypeptide is Interleukin-15 (IL15) (Bubalus bubalis (Domestic water buffalo)).